A 341-amino-acid chain; its full sequence is Serpentine receptor class alpha-28 (341 aa).

The next 7 membrane-spanning stretches (helical) occupy residues 25–45 (FIIS…RVLL), 57–77 (LLFS…VIRL), 107–129 (YYYT…LFSF), 142–162 (ASIV…YWVF), 188–208 (VNNI…FLYI), 242–262 (IVIF…SVFI), and 275–295 (LIIS…LIIL).

The protein belongs to the nematode receptor-like protein sra family.

Its subcellular location is the membrane. The chain is Serpentine receptor class alpha-28 (sra-28) from Caenorhabditis elegans.